An 829-amino-acid polypeptide reads, in one-letter code: MGLPRGPLASLLLLQVCWLQCAASEPCRAVFREAEVTLEAGGAEQEPGQALGKVFMGCPGQEPALFSTDNDDFTVRNGETVQERRSLKERNPLKIFPSKRILRRHKRDWVVAPISVPENGKGPFPQRLNQLKSNKDRDTKIFYSITGPGADSPPEGVFAVEKETGWLLLNKPLDREEIAKYELFGHAVSENGASVEDPMNISIIVTDQNDHKPKFTQDTFRGSVLEGVLPGTSVMQVTATDEDDAIYTYNGVVAYSIHSQEPKDPHDLMFTIHRSTGTISVISSGLDREKVPEYTLTIQATDMDGDGSTTTAVAVVEILDANDNAPMFDPQKYEAHVPENAVGHEVQRLTVTDLDAPNSPAWRATYLIMGGDDGDHFTITTHPESNQGILTTRKGLDFEAKNQHTLYVEVTNEAPFVLKLPTSTATIVVHVEDVNEAPVFVPPSKVVEVQEGIPTGEPVCVYTAEDPDKENQKISYRILRDPAGWLAMDPDSGQVTAVGTLDREDEQFVRNNIYEVMVLAMDNGSPPTTGTGTLLLTLIDVNDHGPVPEPRQITICNQSPVRQVLNITDKDLSPHTSPFQAQLTDDSDIYWTAEVNEEGDTVVLSLKKFLKQDTYDVHLSLSDHGNKEQLTVIRATVCDCHGHVETCPGPWKGGFILPVLGAVLALLFLLLVLLLLVRKKRKIKEPLLLPEDDTRDNVFYYGEEGGGEEDQDYDITQLHRGLEARPEVVLRNDVAPTIIPTPMYRPRPANPDEIGNFIIENLKAANTDPTAPPYDTLLVFDYEGSGSDAASLSSLTSSASDQDQDYDYLNEWGSRFKKLADMYGGGEDD.

A signal peptide spans 1-24 (MGLPRGPLASLLLLQVCWLQCAAS). Residues 25 to 107 (EPCRAVFREA…SKRILRRHKR (83 aa)) constitute a propeptide that is removed on maturation. 5 consecutive Cadherin domains span residues 108–215 (DWVV…KPKF), 216–328 (TQDT…APMF), 329–440 (DPQK…APVF), 441–546 (VPPS…DHGP), and 547–650 (VPEP…CPGP). Over 108–654 (DWVVAPISVP…ETCPGPWKGG (547 aa)) the chain is Extracellular. N-linked (GlcNAc...) asparagine glycosylation occurs at asparagine 200. Asparagine 566 carries an N-linked (GlcNAc...) asparagine glycan. Residues 655–677 (FILPVLGAVLALLFLLLVLLLLV) traverse the membrane as a helical segment. At 678 to 829 (RKKRKIKEPL…ADMYGGGEDD (152 aa)) the chain is on the cytoplasmic side.

In terms of assembly, interacts with CDCP1 and CTNNB1. As to expression, expressed in some normal epithelial tissues and in some carcinoma cell lines.

The protein resides in the cell membrane. Cadherins are calcium-dependent cell adhesion proteins. They preferentially interact with themselves in a homophilic manner in connecting cells; cadherins may thus contribute to the sorting of heterogeneous cell types. The protein is Cadherin-3 (CDH3) of Homo sapiens (Human).